A 454-amino-acid polypeptide reads, in one-letter code: Aquaglyceroporin-9 (454 aa).

Over 1–186 (MEGGLRSPLN…RHTMREPFSE (186 aa)) the chain is Cytoplasmic. The helical transmembrane segment at 187-207 (FFGVFILILFGDGVVAQVVLS) threads the bilayer. The Extracellular segment spans residues 208-216 (SGERGSYQS). Residues 217–237 (ISWGWGIGVMLGVYASGVSGA) form a helical membrane-spanning segment. Residues 238–257 (HINPAVTFANCIFRKFPWRK) are Cytoplasmic-facing. The short motif at 240–242 (NPA) is the NPA 1 element. The helical transmembrane segment at 258–278 (FPIYMLAQVLGAMCASGVVYA) threads the bilayer. Residues 279 to 316 (NYKSAIDMFEGGNNIRTVGLNTSSAGIFCTYPAPFMTK) lie on the Extracellular side of the membrane. Asn-299 carries N-linked (GlcNAc...) asparagine glycosylation. A helical transmembrane segment spans residues 317 to 337 (TGQFFSEFVASTILMFCIYAL). The Cytoplasmic portion of the chain corresponds to 338-351 (QDNGNLGSGNLTPL). The helical transmembrane segment at 352-372 (GLFFVIFGIGACFGWETGYAI) threads the bilayer. Positions 373-375 (NLA) match the NPA 2 motif. At 373-403 (NLARDFGPRLMSYFLGYGHEVWSAGNYYFWV) the chain is on the extracellular side. Residues 404–424 (PMVAPFIGCLFGGWLYDVFIF) form a helical membrane-spanning segment. At 425 to 454 (TGESPINTPWMGLKRLMPGGLGSKKVDSKV) the chain is on the cytoplasmic side.

It belongs to the MIP/aquaporin (TC 1.A.8) family.

The protein resides in the membrane. It carries out the reaction H2O(in) = H2O(out). The enzyme catalyses glycerol(in) = glycerol(out). Water channel required to facilitate the transport of water across membranes. May play a role in the vegetative growth and pathogenicity. The protein is Aquaglyceroporin-9 of Botryotinia fuckeliana (strain B05.10) (Noble rot fungus).